The sequence spans 184 residues: NADH-quinone oxidoreductase subunit B (184 aa).

Positions 37, 38, 103, and 132 each coordinate [4Fe-4S] cluster.

It belongs to the complex I 20 kDa subunit family. In terms of assembly, NDH-1 is composed of 14 different subunits. Subunits NuoB, C, D, E, F, and G constitute the peripheral sector of the complex. [4Fe-4S] cluster is required as a cofactor.

It is found in the cell membrane. It carries out the reaction a quinone + NADH + 5 H(+)(in) = a quinol + NAD(+) + 4 H(+)(out). NDH-1 shuttles electrons from NADH, via FMN and iron-sulfur (Fe-S) centers, to quinones in the respiratory chain. The immediate electron acceptor for the enzyme in this species is believed to be a menaquinone. Couples the redox reaction to proton translocation (for every two electrons transferred, four hydrogen ions are translocated across the cytoplasmic membrane), and thus conserves the redox energy in a proton gradient. This chain is NADH-quinone oxidoreductase subunit B, found in Rhodococcus erythropolis (strain PR4 / NBRC 100887).